A 160-amino-acid chain; its full sequence is Cytochrome b6-f complex subunit 4 (160 aa).

Transmembrane regions (helical) follow at residues 36 to 56, 95 to 115, and 127 to 147; these read ILYM…GLAI, LLGI…PFIE, and PIAM…GAGA.

This sequence belongs to the cytochrome b family. PetD subfamily. The 4 large subunits of the cytochrome b6-f complex are cytochrome b6, subunit IV (17 kDa polypeptide, PetD), cytochrome f and the Rieske protein, while the 4 small subunits are PetG, PetL, PetM and PetN. The complex functions as a dimer.

It is found in the cellular thylakoid membrane. Its function is as follows. Component of the cytochrome b6-f complex, which mediates electron transfer between photosystem II (PSII) and photosystem I (PSI), cyclic electron flow around PSI, and state transitions. This is Cytochrome b6-f complex subunit 4 from Synechocystis sp. (strain ATCC 27184 / PCC 6803 / Kazusa).